The sequence spans 491 residues: Mitochondrial distribution and morphology protein 12 (491 aa).

The SMP-LTD domain occupies 1-491 (MSIDLNWEAA…VFPSYWTFLV (491 aa)). Over residues 72–82 (ESDSSEDEDGE) the composition is skewed to acidic residues. 3 disordered regions span residues 72 to 123 (ESDS…NHHD), 201 to 313 (GWPD…MRER), and 389 to 434 (GDED…QPRR). Basic and acidic residues-rich tracts occupy residues 83–123 (GHDA…NHHD) and 213–229 (MTDHTTGRTRREDHNKN). The segment covering 230-249 (ETGSPSRPSTAHTNPTQLSH) has biased composition (polar residues). Residues 252 to 262 (SAASSSNNTSN) are compositionally biased toward low complexity. Positions 270–279 (DHTSSTTATT) are enriched in polar residues. A compositionally biased stretch (low complexity) spans 400–421 (STANTTTAASGSSTDNNNNNNE).

Belongs to the MDM12 family. In terms of assembly, component of the ER-mitochondria encounter structure (ERMES) or MDM complex, composed of mmm1, mdm10, mdm12 and mdm34. A mmm1 homodimer associates with one molecule of mdm12 on each side in a pairwise head-to-tail manner, and the SMP-LTD domains of mmm1 and mdm12 generate a continuous hydrophobic tunnel for phospholipid trafficking.

It is found in the mitochondrion outer membrane. The protein localises to the endoplasmic reticulum membrane. Its function is as follows. Component of the ERMES/MDM complex, which serves as a molecular tether to connect the endoplasmic reticulum (ER) and mitochondria. Components of this complex are involved in the control of mitochondrial shape and protein biogenesis, and function in nonvesicular lipid trafficking between the ER and mitochondria. Mdm12 is required for the interaction of the ER-resident membrane protein mmm1 and the outer mitochondrial membrane-resident beta-barrel protein mdm10. The mdm12-mmm1 subcomplex functions in the major beta-barrel assembly pathway that is responsible for biogenesis of all mitochondrial outer membrane beta-barrel proteins, and acts in a late step after the SAM complex. The mdm10-mdm12-mmm1 subcomplex further acts in the TOM40-specific pathway after the action of the mdm12-mmm1 complex. Essential for establishing and maintaining the structure of mitochondria and maintenance of mtDNA nucleoids. This is Mitochondrial distribution and morphology protein 12 from Talaromyces stipitatus (strain ATCC 10500 / CBS 375.48 / QM 6759 / NRRL 1006) (Penicillium stipitatum).